The sequence spans 369 residues: Protein RIC-3 (369 aa).

Residues 1 to 28 (MAYSTVQRVALASGLVLALSLLLPKAFL) form the signal peptide. Topologically, residues 29 to 95 (SRGKRQEPPP…AGGGGSGRGL (67 aa)) are lumenal. The disordered stretch occupies residues 30–67 (RGKRQEPPPTPEGKLGRFPPMMHHHQAPSDGQTPGARF). Residues 96-116 (MGQIIPIYGFGIFLYILYILF) form a helical membrane-spanning segment. Residues 117–369 (KLSKGKTTAE…LRKRNPQGLE (253 aa)) lie on the Cytoplasmic side of the membrane. The stretch at 140 to 169 (RKITSFELAQLQEKLKETEAAMEKLINRVG) forms a coiled coil. Residue lysine 202 is modified to N6-acetyllysine; alternate. Lysine 202 is covalently cross-linked (Glycyl lysine isopeptide (Lys-Gly) (interchain with G-Cter in ubiquitin); alternate). 2 disordered regions span residues 272-295 (ESDH…SVTS) and 316-369 (LAEN…QGLE). Over residues 332-346 (ETTKEEWSQDFKDEG) the composition is skewed to basic and acidic residues. Residues 360-369 (LRKRNPQGLE) are compositionally biased toward basic residues.

It belongs to the ric-3 family. As to quaternary structure, monomer and homodimer. Interacts with CHRNA7, CHRNA3, CHRNA4, CHRNB2, CHRNB4 and HTR3A. Broadly expressed, with high levels in muscle, brain, heart, pancreas and testis. In the central nervous system, highest levels are detected in the cerebellum and pituitary gland. Over-expressed in brains from patients with bipolar disease or schizophrenia. Isoform 5 is predominantly expressed in the brain.

Its subcellular location is the endoplasmic reticulum membrane. It localises to the golgi apparatus membrane. Molecular chaperone which facilitates proper subunit assembly and surface trafficking of alpha-7 (CHRNA7) and alpha-8 (CHRNA8) nicotinic acetylcholine receptors. May also promote functional expression of homomeric serotoninergic 5-HT3 receptors, and of heteromeric acetylcholine receptors alpha-3/beta-2, alpha-3/beta-4, alpha-4/beta-2 and alpha-4/beta-4. This chain is Protein RIC-3 (RIC3), found in Homo sapiens (Human).